A 442-amino-acid chain; its full sequence is Ribosomal protein uS12 methylthiotransferase RimO (442 aa).

Positions 8-118 constitute an MTTase N-terminal domain; sequence PKVGFVSLGC…VLGHVHKYVA (111 aa). Residues Cys17, Cys53, Cys82, Cys150, Cys154, and Cys157 each coordinate [4Fe-4S] cluster. The region spanning 136-373 is the Radical SAM core domain; sequence LTPRHYAYLK…MELQQQVSIR (238 aa). In terms of domain architecture, TRAM spans 376–442; sequence ARKVGKEMTV…EYDLWASLIG (67 aa).

It belongs to the methylthiotransferase family. RimO subfamily. The cofactor is [4Fe-4S] cluster.

Its subcellular location is the cytoplasm. The catalysed reaction is L-aspartate(89)-[ribosomal protein uS12]-hydrogen + (sulfur carrier)-SH + AH2 + 2 S-adenosyl-L-methionine = 3-methylsulfanyl-L-aspartate(89)-[ribosomal protein uS12]-hydrogen + (sulfur carrier)-H + 5'-deoxyadenosine + L-methionine + A + S-adenosyl-L-homocysteine + 2 H(+). Its function is as follows. Catalyzes the methylthiolation of an aspartic acid residue of ribosomal protein uS12. This chain is Ribosomal protein uS12 methylthiotransferase RimO, found in Aeromonas salmonicida (strain A449).